The chain runs to 218 residues: Outer-membrane lipoprotein LolB (218 aa).

The N-terminal stretch at 1–24 (MNNLSYLTKIPLIWVLLSVTLLSA) is a signal peptide. Cysteine 25 carries the N-palmitoyl cysteine lipid modification. Residue cysteine 25 is the site of S-diacylglycerol cysteine attachment.

Belongs to the LolB family. In terms of assembly, monomer.

Its subcellular location is the cell outer membrane. Functionally, plays a critical role in the incorporation of lipoproteins in the outer membrane after they are released by the LolA protein. In Shewanella sediminis (strain HAW-EB3), this protein is Outer-membrane lipoprotein LolB.